We begin with the raw amino-acid sequence, 57 residues long: Large ribosomal subunit protein bL32c (57 aa).

The protein belongs to the bacterial ribosomal protein bL32 family.

Its subcellular location is the plastid. The protein localises to the chloroplast. This Drimys granadensis protein is Large ribosomal subunit protein bL32c.